A 104-amino-acid chain; its full sequence is Turripeptide OL55 (104 aa).

In terms of processing, contains 8 disulfide bonds. In terms of tissue distribution, expressed by the venom duct.

The protein localises to the secreted. In terms of biological role, acts as a neurotoxin by inhibiting an ion channel. This Iotyrris olangoensis (Sea snail) protein is Turripeptide OL55.